The sequence spans 181 residues: Mitochondrial pyruvate carrier-like protein (181 aa).

Helical transmembrane passes span 23 to 42 (YLAS…PLAA) and 52 to 74 (IISG…FAYR). Positions 125–154 (TGSVDSSATSTGSVDSSATSTGSVDSSAAT) are disordered.

The protein belongs to the mitochondrial pyruvate carrier (MPC) (TC 2.A.105) family.

The protein localises to the mitochondrion inner membrane. May mediate the uptake of pyruvate into mitochondria. This chain is Mitochondrial pyruvate carrier-like protein, found in Bos taurus (Bovine).